The primary structure comprises 371 residues: MVEAIHRSTRIEFSKSSLAYNVQYTKQVSGAKTLWLAVKSNAYGHGLLQVSKIARECGVDGLAVSVLDEGIAIRQAGIDDFILILGPIDVKYAPIASKYHFLTTVSSLDWLKSADKILGKEKLSVNLAVDTGMNRIGVRSKKDLKDEIEFLQEHSDHFSYDGIFTHFASSDNPDDHYFQRQKNRWYELIDGLIMPRYVHVMNSGAAMYHSKELPGCNSIARVGTVVYGVEPSEGVLGPIDKLKPVFELKSALTFVKKIPAGEGISYGSKFVTSRDTWIGTLPIGYGDGWLAEYQDFQLLIDGQKCRQVGQIAMDQMMVALPHEYPIGTEVTLIGKSGKYENTLYDLHKHSGVPPWKITVAFSDRLKRMVVD.

Lys-39 acts as the Proton acceptor in catalysis. The residue at position 39 (Lys-39) is an N6-(pyridoxal phosphate)lysine. Arg-135 provides a ligand contact to substrate. Catalysis depends on Tyr-266, which acts as the Proton acceptor. Met-313 serves as a coordination point for substrate.

It belongs to the alanine racemase family. In terms of assembly, homodimer. Pyridoxal 5'-phosphate is required as a cofactor.

The catalysed reaction is L-lysine = D-lysine. Catalyzes the interconversion of D-lysine and L-lysine. Can also use arginine and ornithine, but not alanine. In Oenococcus oeni (strain ATCC BAA-331 / PSU-1), this protein is Lysine racemase.